A 1181-amino-acid chain; its full sequence is HEAT repeat-containing protein 6 (1181 aa).

The stretch at 159–198 is one HEAT 1 repeat; it reads PELLGNTGLLMKLSDLAQSDPEVRRAAVHCMANLCLSVPG. 2 disordered regions span residues 292-347 and 371-390; these read QYDG…PVTG and LDGS…SSSS. The span at 300–312 shows a compositional bias: polar residues; it reads KPQQSESSASRPT. A compositionally biased stretch (basic residues) spans 313–325; sequence LNKKKKSKVKPKK. Ser336 and Ser337 each carry phosphoserine. Ser399 and Ser402 each carry phosphoserine. HEAT repeat units follow at residues 452–490, 515–552, and 558–595; these read ELGS…GSKQ, SIRE…NAPY, and SLLT…THAP. The tract at residues 613–646 is disordered; that stretch reads NSNSATPHLSPPDWWKKAPAGPSLEETSVSSPKG. Residue Thr618 is modified to Phosphothreonine. Over residues 637–646 the composition is skewed to polar residues; sequence EETSVSSPKG. Ser643 carries the phosphoserine modification.

As to expression, amplified in breast cancer cell lines MCF-7 and BT-474.

Functionally, amplification-dependent oncogene. The protein is HEAT repeat-containing protein 6 (HEATR6) of Homo sapiens (Human).